Consider the following 671-residue polypeptide: UvrABC system protein B (671 aa).

A Helicase ATP-binding domain is found at 25 to 412 (EGIDAGLAHQ…AGRIVEQVVR (388 aa)). 38–45 (GVTGSGKT) contributes to the ATP binding site. The Beta-hairpin signature appears at 91-114 (YYDYYQPEAYVPSSDTFIEKDASI). The region spanning 429–582 (QVDDLLSEIH…QIAFNLEHGI (154 aa)) is the Helicase C-terminal domain. The disordered stretch occupies residues 601–624 (PGSRSKKRKGMAKAAEENARYENE). Basic and acidic residues predominate over residues 614-624 (AAEENARYENE). The UVR domain occupies 632–667 (NKRIRQLEEKMYQLARDLEFEAAAQMRDEIGKLRER).

This sequence belongs to the UvrB family. As to quaternary structure, forms a heterotetramer with UvrA during the search for lesions. Interacts with UvrC in an incision complex.

The protein resides in the cytoplasm. In terms of biological role, the UvrABC repair system catalyzes the recognition and processing of DNA lesions. A damage recognition complex composed of 2 UvrA and 2 UvrB subunits scans DNA for abnormalities. Upon binding of the UvrA(2)B(2) complex to a putative damaged site, the DNA wraps around one UvrB monomer. DNA wrap is dependent on ATP binding by UvrB and probably causes local melting of the DNA helix, facilitating insertion of UvrB beta-hairpin between the DNA strands. Then UvrB probes one DNA strand for the presence of a lesion. If a lesion is found the UvrA subunits dissociate and the UvrB-DNA preincision complex is formed. This complex is subsequently bound by UvrC and the second UvrB is released. If no lesion is found, the DNA wraps around the other UvrB subunit that will check the other stand for damage. The chain is UvrABC system protein B from Pseudomonas syringae pv. syringae (strain B728a).